The following is a 70-amino-acid chain: U2-agatoxin-Ao1p (70 aa).

The signal sequence occupies residues 1-20; the sequence is MRAIISLILISAMVFSMIAA. The propeptide occupies 21 to 34; the sequence is VPXXEGLQLSEDER. Cystine bridges form between C37-C53, C44-C58, and C52-C68. The residue at position 69 (L69) is a Leucine amide.

Belongs to the neurotoxin 01 (U2-agtx) family. In terms of tissue distribution, expressed by the venom gland.

The protein localises to the secreted. In terms of biological role, insect active toxin causing rapid but reversible paralysis in crickets. No activity shown in mammals. Does not show effect on mammalian voltage-gated calcium channels. This chain is U2-agatoxin-Ao1p, found in Agelena orientalis (Funnel-web spider).